We begin with the raw amino-acid sequence, 268 residues long: Interleukin-1 beta (268 aa).

Residues 1-116 (MATVPELTSE…TWDDYSLECD (116 aa)) constitute a propeptide that is removed on maturation.

This sequence belongs to the IL-1 family. In terms of assembly, monomer. In its precursor form, weakly interacts with full-length MEFV; the mature cytokine does not interact at all. Interacts with integrins ITGAV:ITGBV and ITGA5:ITGB1; integrin-binding is required for IL1B signaling. Interacts with cargo receptor TMED10; the interaction is direct and is required for the secretion of IL1B mature form. Interacts with HSP90AB1; the interaction facilitates cargo translocation into the ERGIC. Interacts with HSP90B1; the interaction facilitates cargo translocation into the ERGIC.

The protein localises to the cytoplasm. It is found in the cytosol. Its subcellular location is the secreted. The protein resides in the lysosome. It localises to the extracellular exosome. Potent pro-inflammatory cytokine. Initially discovered as the major endogenous pyrogen, induces prostaglandin synthesis, neutrophil influx and activation, T-cell activation and cytokine production, B-cell activation and antibody production, and fibroblast proliferation and collagen production. Promotes Th17 differentiation of T-cells. Synergizes with IL12/interleukin-12 to induce IFNG synthesis from T-helper 1 (Th1) cells. Plays a role in angiogenesis by inducing VEGF production synergistically with TNF and IL6. Involved in transduction of inflammation downstream of pyroptosis: its mature form is specifically released in the extracellular milieu by passing through the gasdermin-D (GSDMD) pore. This is Interleukin-1 beta (IL1B) from Oryctolagus cuniculus (Rabbit).